A 139-amino-acid chain; its full sequence is ATP synthase epsilon chain (139 aa).

This sequence belongs to the ATPase epsilon chain family. As to quaternary structure, F-type ATPases have 2 components, CF(1) - the catalytic core - and CF(0) - the membrane proton channel. CF(1) has five subunits: alpha(3), beta(3), gamma(1), delta(1), epsilon(1). CF(0) has three main subunits: a, b and c.

The protein localises to the cell inner membrane. In terms of biological role, produces ATP from ADP in the presence of a proton gradient across the membrane. This is ATP synthase epsilon chain from Pseudomonas putida (strain W619).